Here is a 391-residue protein sequence, read N- to C-terminus: Saxitoxin and tetrodotoxin-binding protein 2 (391 aa).

Positions M1–A20 are cleaved as a signal peptide. A run of 2 repeats spans residues P24–S202 and P203–D391. N41, N54, N63, N97, N234, N268, N277, and N307 each carry an N-linked (GlcNAc...) asparagine glycan.

As to quaternary structure, homodimer or heterodimer of PSTBP1 and PSTBP2. Glycosylated.

It is found in the secreted. Binds both saxitoxin and tetradotoxin. May play a role in toxin accumulation and/or excretion. The polypeptide is Saxitoxin and tetrodotoxin-binding protein 2 (psbp2) (Takifugu pardalis (Panther puffer)).